A 162-amino-acid polypeptide reads, in one-letter code: Large ribosomal subunit protein bL9 (162 aa).

It belongs to the bacterial ribosomal protein bL9 family.

In terms of biological role, binds to the 23S rRNA. In Chlorobaculum parvum (strain DSM 263 / NCIMB 8327) (Chlorobium vibrioforme subsp. thiosulfatophilum), this protein is Large ribosomal subunit protein bL9.